Here is a 118-residue protein sequence, read N- to C-terminus: DNA-directed RNA polymerase subunit omega (118 aa).

Belongs to the RNA polymerase subunit omega family. The RNAP catalytic core consists of 2 alpha, 1 beta, 1 beta' and 1 omega subunit. When a sigma factor is associated with the core the holoenzyme is formed, which can initiate transcription.

It catalyses the reaction RNA(n) + a ribonucleoside 5'-triphosphate = RNA(n+1) + diphosphate. Promotes RNA polymerase assembly. Latches the N- and C-terminal regions of the beta' subunit thereby facilitating its interaction with the beta and alpha subunits. The protein is DNA-directed RNA polymerase subunit omega of Paracoccus denitrificans (strain Pd 1222).